The following is a 97-amino-acid chain: Probable gamma-secretase subunit PEN-2 (97 aa).

At methionine 1–lysine 20 the chain is on the cytoplasmic side. The segment at residues leucine 21–tyrosine 39 is an intramembrane region (helical). The Cytoplasmic segment spans residues phenylalanine 40–leucine 55. A helical transmembrane segment spans residues lysine 56–tyrosine 76. Residues leucine 77 to glycine 97 are Lumenal-facing.

It belongs to the PEN-2 family. The functional gamma-secretase complex is composed of at least four polypeptides: a presenilin homodimer, nicastrin, aph1 and psenen.

It is found in the endoplasmic reticulum membrane. It localises to the golgi apparatus. The protein localises to the golgi stack membrane. The protein resides in the cell membrane. Its subcellular location is the membrane. Functionally, essential subunit of the gamma-secretase complex, an endoprotease complex that catalyzes the intramembrane cleavage of integral membrane proteins such as Notch receptors. The gamma-secretase complex plays a role in Notch and Wnt signaling cascades and regulation of downstream processes via its role in processing key regulatory proteins. This is Probable gamma-secretase subunit PEN-2 (psenen) from Dictyostelium discoideum (Social amoeba).